Reading from the N-terminus, the 239-residue chain is tRNA (guanine-N(7)-)-methyltransferase (239 aa).

Glu-69, Glu-94, Asp-121, and Asp-144 together coordinate S-adenosyl-L-methionine. Asp-144 is an active-site residue. Lys-148 is a binding site for substrate. The segment at 150-155 (RHNKRR) is interaction with RNA. Substrate-binding positions include Asp-180 and 217-220 (TKFE).

Belongs to the class I-like SAM-binding methyltransferase superfamily. TrmB family. As to quaternary structure, monomer.

It carries out the reaction guanosine(46) in tRNA + S-adenosyl-L-methionine = N(7)-methylguanosine(46) in tRNA + S-adenosyl-L-homocysteine. The protein operates within tRNA modification; N(7)-methylguanine-tRNA biosynthesis. Its function is as follows. Catalyzes the formation of N(7)-methylguanine at position 46 (m7G46) in tRNA. This Yersinia pestis (strain Pestoides F) protein is tRNA (guanine-N(7)-)-methyltransferase.